The chain runs to 374 residues: Dihydrolipoyllysine-residue acetyltransferase component of acetoin cleaving system (374 aa).

The region spanning Ile9–Ala84 is the Lipoyl-binding domain. An N6-lipoyllysine modification is found at Lys50. The region spanning Thr137 to Lys360 is the AB hydrolase-1 domain.

It depends on (R)-lipoate as a cofactor.

It carries out the reaction N(6)-[(R)-dihydrolipoyl]-L-lysyl-[protein] + acetyl-CoA = N(6)-[(R)-S(8)-acetyldihydrolipoyl]-L-lysyl-[protein] + CoA. The protein operates within ketone degradation; acetoin degradation. Dihydrolipoamide acetyltransferase involved in acetoin catabolism. The chain is Dihydrolipoyllysine-residue acetyltransferase component of acetoin cleaving system (acoC) from Cupriavidus necator (strain ATCC 17699 / DSM 428 / KCTC 22496 / NCIMB 10442 / H16 / Stanier 337) (Ralstonia eutropha).